A 397-amino-acid chain; its full sequence is GDNF family receptor alpha-3 (397 aa).

An N-terminal signal peptide occupies residues 1-28; the sequence is MGLSWSPRPPLLMILLLVLSLWLPLGAG. Cysteines 48 and 54 form a disulfide. N-linked (GlcNAc...) asparagine glycans are attached at residues N92 and N145. 10 cysteine pairs are disulfide-bonded: C159/C215, C166/C172, C183/C193, C188/C236, C217/C224, C245/C313, C252/C258, C269/C285, C278/C337, and C315/C325. N-linked (GlcNAc...) asparagine glycosylation occurs at N306. Residue N371 is the site of GPI-anchor amidated asparagine attachment. Positions 372-397 are cleaved as a propeptide — removed in mature form; the sequence is PALRLQPRLPILSFSILPLILLQTLW.

The protein belongs to the GDNFR family. Interacts with ARTN ligand and RET: forms a 2:2:2 ternary complex composed of ARTN ligand, GFRA3 and RET receptor. Interacts with SORL1.

Its subcellular location is the cell membrane. In terms of biological role, receptor for artemin (ARTN), a growth factor that supports the survival of sensory and sympathetic peripheral neurons. ARTN-binding leads to autophosphorylation and activation of the RET receptor. This Mus musculus (Mouse) protein is GDNF family receptor alpha-3 (Gfra3).